The sequence spans 145 residues: Large ribosomal subunit protein uL16 (145 aa).

Belongs to the universal ribosomal protein uL16 family. Part of the 50S ribosomal subunit.

In terms of biological role, binds 23S rRNA and is also seen to make contacts with the A and possibly P site tRNAs. This Exiguobacterium sibiricum (strain DSM 17290 / CCUG 55495 / CIP 109462 / JCM 13490 / 255-15) protein is Large ribosomal subunit protein uL16.